We begin with the raw amino-acid sequence, 459 residues long: Inositol-trisphosphate 3-kinase A (459 aa).

The disordered stretch occupies residues 1–26; it reads MTLPGHPTGMARPRGAGPCSPGLERA. Arg35, Arg55, and Arg62 each carry omega-N-methylarginine. Positions 49-164 are disordered; the sequence is AAAGEPRARG…TSEDVGQKSH (116 aa). Residues 116–132 are compositionally biased toward low complexity; sequence RRLSTSSLSSTGSSSLL. A phosphoserine mark is found at Ser135 and Ser195. ATP contacts are provided by residues Ser195, Lys207, 247 to 249, and Asp260; that span reads QDL. Residues Lys262 and Arg283 each contribute to the substrate site. Residues 285-293 are calmodulin-binding; it reads DMYKKMLAV. 310–317 contacts substrate; that stretch reads KPRYMQWR. Residues Lys334 and Asp414 each contribute to the ATP site. Lys417 contributes to the substrate binding site.

The protein belongs to the inositol phosphokinase (IPK) family.

The protein resides in the cytoplasm. Its subcellular location is the cytoskeleton. The enzyme catalyses 1D-myo-inositol 1,4,5-trisphosphate + ATP = 1D-myo-inositol 1,3,4,5-tetrakisphosphate + ADP + H(+). Activated by calcium/calmodulin. In terms of biological role, catalyzes the phosphorylation of 1D-myo-inositol 1,4,5-trisphosphate (InsP3) into 1D-myo-inositol 1,3,4,5-tetrakisphosphate and participates to the regulation of calcium homeostasis. In Rattus norvegicus (Rat), this protein is Inositol-trisphosphate 3-kinase A.